Here is a 301-residue protein sequence, read N- to C-terminus: uncharacterized protein (301 aa).

The signal sequence occupies residues 1 to 22; that stretch reads MPGRFTVALVIALGGTCGVADA. The GP-PDE domain maps to 31-300; that stretch reads PMIVAHRAGT…DSPLAAQQWR (270 aa).

This is an uncharacterized protein from Mycobacterium tuberculosis (strain ATCC 25618 / H37Rv).